Consider the following 332-residue polypeptide: Glycerol-3-phosphate dehydrogenase [NAD(P)+] (332 aa).

Residues Ser15, Trp16, and Lys110 each coordinate NADPH. 3 residues coordinate sn-glycerol 3-phosphate: Lys110, Gly137, and Ser139. NADPH is bound at residue Ala141. Lys192, Asp245, Ser255, Arg256, and Asn257 together coordinate sn-glycerol 3-phosphate. Lys192 serves as the catalytic Proton acceptor. Arg256 lines the NADPH pocket. Residue Glu282 coordinates NADPH.

This sequence belongs to the NAD-dependent glycerol-3-phosphate dehydrogenase family.

It localises to the cytoplasm. The catalysed reaction is sn-glycerol 3-phosphate + NAD(+) = dihydroxyacetone phosphate + NADH + H(+). It carries out the reaction sn-glycerol 3-phosphate + NADP(+) = dihydroxyacetone phosphate + NADPH + H(+). It functions in the pathway membrane lipid metabolism; glycerophospholipid metabolism. Functionally, catalyzes the reduction of the glycolytic intermediate dihydroxyacetone phosphate (DHAP) to sn-glycerol 3-phosphate (G3P), the key precursor for phospholipid synthesis. This chain is Glycerol-3-phosphate dehydrogenase [NAD(P)+], found in Coxiella burnetii (strain RSA 331 / Henzerling II).